Here is a 95-residue protein sequence, read N- to C-terminus: Large ribosomal subunit protein uL23 (95 aa).

The protein belongs to the universal ribosomal protein uL23 family. As to quaternary structure, part of the 50S ribosomal subunit. Contacts protein L29, and trigger factor when it is bound to the ribosome.

In terms of biological role, one of the early assembly proteins it binds 23S rRNA. One of the proteins that surrounds the polypeptide exit tunnel on the outside of the ribosome. Forms the main docking site for trigger factor binding to the ribosome. This Thermodesulfovibrio yellowstonii (strain ATCC 51303 / DSM 11347 / YP87) protein is Large ribosomal subunit protein uL23.